Here is a 395-residue protein sequence, read N- to C-terminus: Cytoplasmic tRNA 2-thiolation protein 1 (395 aa).

Positions 297 to 309 are enriched in basic residues; that stretch reads TVAYKNKNKNKKK. Residues 297 to 335 form a disordered region; sequence TVAYKNKNKNKKKSNSEQEEQEKQEQEVNPDGSISLNRN.

This sequence belongs to the TtcA family. CTU1/NCS6/ATPBD3 subfamily.

It is found in the cytoplasm. It functions in the pathway tRNA modification; 5-methoxycarbonylmethyl-2-thiouridine-tRNA biosynthesis. In terms of biological role, plays a central role in 2-thiolation of mcm(5)S(2)U at tRNA wobble positions of tRNA(Lys), tRNA(Glu) and tRNA(Gln). Directly binds tRNAs and probably acts by catalyzing adenylation of tRNAs, an intermediate required for 2-thiolation. It is unclear whether it acts as a sulfurtransferase that transfers sulfur from thiocarboxylated URM1 onto the uridine of tRNAs at wobble position. Prior mcm(5) tRNA modification by the elongator complex is required for 2-thiolation. May also be involved in protein urmylation. This chain is Cytoplasmic tRNA 2-thiolation protein 1, found in Candida albicans (strain SC5314 / ATCC MYA-2876) (Yeast).